Here is an 840-residue protein sequence, read N- to C-terminus: Urease (840 aa).

A Urease domain is found at 402–840 (GAIDCHVHYI…VPLSRNYFLF (439 aa)). Ni(2+) contacts are provided by His407, His409, and Lys490. Lys490 carries the N6-carboxylysine modification. His492 is a substrate binding site. Ni(2+) contacts are provided by His519 and His545. The active-site Proton donor is the His593. A Ni(2+)-binding site is contributed by Asp633.

This sequence in the C-terminal section; belongs to the metallo-dependent hydrolases superfamily. Urease alpha subunit family. In terms of assembly, homohexamer. Other oligomeric forms may exist depending on pH and presence of salts. Ni cation is required as a cofactor. Carboxylation allows a single lysine to coordinate two nickel ions.

The enzyme catalyses urea + 2 H2O + H(+) = hydrogencarbonate + 2 NH4(+). Its pathway is nitrogen metabolism; urea degradation; CO(2) and NH(3) from urea (urease route): step 1/1. Its activity is regulated as follows. P-hydroxymercuribenzoate irreversibly abolishes ureolytic activity, but does not inhibit the ability to activate platelets. Also inhibited by acetohydroxamic acid (AHA), a chelator of Ni2+ and Zn2+ ions. Urea hydrolase involved in nitrogen recycling from ureide, purine, and arginine catabolism. Is known to be highly toxic and lethal when given by intravenous route, producing convulsions and other signs of central nervous system intoxication associated with the high levels of ammonia formed in the blood of mice and rabbits. Is neurotoxic in mammals, when directly injected into hippocampus. It may induce seizures by acting at a neuronal network level, thereby disturbing electroencephalographic rhythms and causing metabolic alterations in key areas related to epileptogenesis and to neurogenic pulmonary edema. It increases calcium influx and neuronal firing rate in the hippocampus. Is able to insert itself into lipid bilayers, altering physicochemical properties of artificial membranes, and forming cation-selective ion channels. In vitro, has the ability to induce platelet aggregation, platelet granules secretion and release of ATP. In contrast to canatoxin, another urease from C.ensiformis, is not lethal to mice when intraperitoneally injected. The chain is Urease from Canavalia ensiformis (Jack bean).